Here is a 291-residue protein sequence, read N- to C-terminus: Formamidopyrimidine-DNA glycosylase (291 aa).

Catalysis depends on Pro2, which acts as the Schiff-base intermediate with DNA. The Proton donor role is filled by Glu3. Catalysis depends on Lys58, which acts as the Proton donor; for beta-elimination activity. Residues His100, Arg123, and Lys166 each coordinate DNA. An FPG-type zinc finger spans residues 257 to 291 (SVYGREGKECLHCGIPIVRILQSGRSSFYCSQCQK). Arg281 acts as the Proton donor; for delta-elimination activity in catalysis.

This sequence belongs to the FPG family. In terms of assembly, monomer. It depends on Zn(2+) as a cofactor.

It carries out the reaction Hydrolysis of DNA containing ring-opened 7-methylguanine residues, releasing 2,6-diamino-4-hydroxy-5-(N-methyl)formamidopyrimidine.. The enzyme catalyses 2'-deoxyribonucleotide-(2'-deoxyribose 5'-phosphate)-2'-deoxyribonucleotide-DNA = a 3'-end 2'-deoxyribonucleotide-(2,3-dehydro-2,3-deoxyribose 5'-phosphate)-DNA + a 5'-end 5'-phospho-2'-deoxyribonucleoside-DNA + H(+). In terms of biological role, involved in base excision repair of DNA damaged by oxidation or by mutagenic agents. Acts as a DNA glycosylase that recognizes and removes damaged bases. Has a preference for oxidized purines, such as 7,8-dihydro-8-oxoguanine (8-oxoG). Has AP (apurinic/apyrimidinic) lyase activity and introduces nicks in the DNA strand. Cleaves the DNA backbone by beta-delta elimination to generate a single-strand break at the site of the removed base with both 3'- and 5'-phosphates. This Bartonella henselae (strain ATCC 49882 / DSM 28221 / CCUG 30454 / Houston 1) (Rochalimaea henselae) protein is Formamidopyrimidine-DNA glycosylase.